Consider the following 31-residue polypeptide: Cytochrome b6-f complex subunit 6 (31 aa).

A helical membrane pass occupies residues 4–24; the sequence is IFSYIALLLSALVITLTCYIG.

Belongs to the PetL family. The 4 large subunits of the cytochrome b6-f complex are cytochrome b6, subunit IV (17 kDa polypeptide, PetD), cytochrome f and the Rieske protein, while the 4 small subunits are PetG, PetL, PetM and PetN. The complex functions as a dimer.

It localises to the plastid. The protein resides in the chloroplast thylakoid membrane. Component of the cytochrome b6-f complex, which mediates electron transfer between photosystem II (PSII) and photosystem I (PSI), cyclic electron flow around PSI, and state transitions. PetL is important for photoautotrophic growth as well as for electron transfer efficiency and stability of the cytochrome b6-f complex. The chain is Cytochrome b6-f complex subunit 6 from Chlorella vulgaris (Green alga).